The primary structure comprises 343 residues: Cell invasion protein SipD (343 aa).

The segment at 1-26 is disordered; sequence MLNIQNYSASPHPGIVAERPQTPSAS. Positions 295–322 form a coiled coil; it reads KAQEENMKTTLQTLTQKYSNANSLYDNL.

This sequence belongs to the invasin protein D family.

The protein resides in the secreted. In terms of biological role, required for translocation of effector proteins via the type III secretion system SPI-1, which is essential for an efficient bacterial internalization. Probably acts by modulating the secretion of SipA, SipB, and SipC. This is Cell invasion protein SipD (sipD) from Salmonella typhimurium (strain LT2 / SGSC1412 / ATCC 700720).